Reading from the N-terminus, the 206-residue chain is Guanylate kinase (206 aa).

Positions 5–183 (FNLLILSGPS…SKEIILSIAK (179 aa)) constitute a Guanylate kinase-like domain. An ATP-binding site is contributed by 12 to 19 (GPSGAGKS).

It belongs to the guanylate kinase family.

The protein localises to the cytoplasm. The enzyme catalyses GMP + ATP = GDP + ADP. Essential for recycling GMP and indirectly, cGMP. The polypeptide is Guanylate kinase (gmk) (Helicobacter pylori (strain ATCC 700392 / 26695) (Campylobacter pylori)).